The sequence spans 211 residues: Putative transposase for insertion sequence element IS402 (211 aa).

A disordered region spans residues 51–71; that stretch reads RRWGRPKTGPNPTDRARPGSK.

It belongs to the transposase 11 family.

Involved in the transposition of the insertion sequence. The protein is Putative transposase for insertion sequence element IS402 of Burkholderia cepacia (Pseudomonas cepacia).